Reading from the N-terminus, the 258-residue chain is Enoyl-[acyl-carrier-protein] reductase [NADH] FabI (258 aa).

NAD(+) is bound by residues Gly14, Ser20–Ile21, Asp67–Val68, and Ile95. Residue Ala98 coordinates substrate. Active-site proton acceptor residues include Tyr148 and Tyr158. NAD(+)-binding positions include Lys165 and Ile194–Ser198.

This sequence belongs to the short-chain dehydrogenases/reductases (SDR) family. FabI subfamily. In terms of assembly, homotetramer.

It carries out the reaction a 2,3-saturated acyl-[ACP] + NAD(+) = a (2E)-enoyl-[ACP] + NADH + H(+). The catalysed reaction is (2E)-butenoyl-[ACP] + NADH + H(+) = butanoyl-[ACP] + NAD(+). The protein operates within lipid metabolism; fatty acid biosynthesis. Its activity is regulated as follows. Inhibited by triclosan and acrylamide. Functionally, catalyzes the reduction of a carbon-carbon double bond in an enoyl moiety that is covalently linked to an acyl carrier protein (ACP). Involved in the elongation cycle of fatty acid which are used in the lipid metabolism. The protein is Enoyl-[acyl-carrier-protein] reductase [NADH] FabI (fabI) of Bacillus subtilis (strain 168).